Reading from the N-terminus, the 768-residue chain is DNA replication licensing factor MCM3 homolog 3 (768 aa).

One can recognise an MCM domain in the interval Thr290 to Ala497. Gly340–Ser347 is a binding site for ATP. An Arginine finger motif is present at residues Ser472–Asp475. Positions Glu661 to Ala670 are enriched in basic and acidic residues. Residues Glu661–Val690 form a disordered region. The segment covering Ala672–Ser682 has biased composition (gly residues).

This sequence belongs to the MCM family.

It is found in the nucleus. It catalyses the reaction ATP + H2O = ADP + phosphate + H(+). Its function is as follows. Acts as a factor that allows the DNA to undergo a single round of replication per cell cycle. Required for DNA replication and cell proliferation. May act as a component of the MCM complex which is the putative replicative helicase of the replication licensing system in eukaryotic cells. This is DNA replication licensing factor MCM3 homolog 3 (ROA3) from Zea mays (Maize).